A 466-amino-acid chain; its full sequence is D-inositol 3-phosphate glycosyltransferase (466 aa).

Over residues 1–12 (MRPMRAGAGAAG) the composition is skewed to low complexity. The segment at 1–22 (MRPMRAGAGAAGESCKDDGVRP) is disordered. Histidine 43 contributes to the 1D-myo-inositol 3-phosphate binding site. UDP-N-acetyl-alpha-D-glucosamine is bound by residues 49–50 (QP) and glycine 57. 1D-myo-inositol 3-phosphate contacts are provided by residues 54-59 (DAGGMN), lysine 112, tyrosine 145, threonine 169, and arginine 189. Arginine 263, lysine 268, and glutamine 321 together coordinate UDP-N-acetyl-alpha-D-glucosamine. Mg(2+) contacts are provided by phenylalanine 330, histidine 331, and valine 333. Glutamate 343 and glutamate 351 together coordinate UDP-N-acetyl-alpha-D-glucosamine. Threonine 357 contacts Mg(2+). The segment at 446–466 (VRDPVAARKPRRWTARRGVGA) is disordered.

This sequence belongs to the glycosyltransferase group 1 family. MshA subfamily. Homodimer.

The enzyme catalyses 1D-myo-inositol 3-phosphate + UDP-N-acetyl-alpha-D-glucosamine = 1D-myo-inositol 2-acetamido-2-deoxy-alpha-D-glucopyranoside 3-phosphate + UDP + H(+). Functionally, catalyzes the transfer of a N-acetyl-glucosamine moiety to 1D-myo-inositol 3-phosphate to produce 1D-myo-inositol 2-acetamido-2-deoxy-glucopyranoside 3-phosphate in the mycothiol biosynthesis pathway. This Mycobacterium marinum (strain ATCC BAA-535 / M) protein is D-inositol 3-phosphate glycosyltransferase.